We begin with the raw amino-acid sequence, 941 residues long: Isoleucine--tRNA ligase (941 aa).

The 'HIGH' region motif lies at P69–H79. E589 lines the L-isoleucyl-5'-AMP pocket. The 'KMSKS' region signature appears at K630 to S634. K633 provides a ligand contact to ATP. Residues C915, C918, C932, and C935 each coordinate Zn(2+).

This sequence belongs to the class-I aminoacyl-tRNA synthetase family. IleS type 1 subfamily. As to quaternary structure, monomer. The cofactor is Zn(2+).

The protein localises to the cytoplasm. It carries out the reaction tRNA(Ile) + L-isoleucine + ATP = L-isoleucyl-tRNA(Ile) + AMP + diphosphate. Its function is as follows. Catalyzes the attachment of isoleucine to tRNA(Ile). As IleRS can inadvertently accommodate and process structurally similar amino acids such as valine, to avoid such errors it has two additional distinct tRNA(Ile)-dependent editing activities. One activity is designated as 'pretransfer' editing and involves the hydrolysis of activated Val-AMP. The other activity is designated 'posttransfer' editing and involves deacylation of mischarged Val-tRNA(Ile). The protein is Isoleucine--tRNA ligase of Zymomonas mobilis subsp. mobilis (strain ATCC 31821 / ZM4 / CP4).